The sequence spans 380 residues: MEKELKVITIDELKKYIRNNEEDKIEEVDVVTSATCGIMSGTAGIFHIPFNEVFKRAEEIYLNDIKGVVGICPNEFLGKVDAIFYGEVGFLFKDLVKGKVVEAKAISEGKIYKNEITIDDLPTAKMIGTRMAFKNYTAITNLSDEEVNTIFHRLPLKKGEASFSGCGMLNPLENMVIKDEKDVVGKKALLNGAEAIILGFGTRASIEKPNLMMSADMKDMDAYYLGGFVTSNGIEIYNTIAVPIKVDEHKEALKKLDKDITLPLVNIFGREIIDIGSYAEVWENVDLRPKIYQDKCKNCRECLVEKYCPTFAIKRENGKIKITEDCFGCGVCNICPYGVFKTKLGSVCGIPITCRQSDRKRALKLAKELKKKIERGEFKI.

In terms of domain architecture, 4Fe-4S ferredoxin-type spans 287-318 (LRPKIYQDKCKNCRECLVEKYCPTFAIKRENG).

This is an uncharacterized protein from Methanocaldococcus jannaschii (strain ATCC 43067 / DSM 2661 / JAL-1 / JCM 10045 / NBRC 100440) (Methanococcus jannaschii).